A 554-amino-acid chain; its full sequence is Apyrase (554 aa).

The signal sequence occupies residues 1–21 (MFKITVFIYVLQLILPSKVHS). Positions 43, 45, 92, 124, 224, and 248 each coordinate a divalent metal cation. AMP-binding residues include R358, N394, R399, F418, F504, and D510.

Belongs to the 5'-nucleotidase family. A divalent metal cation is required as a cofactor. As to expression, salivary gland (at protein level).

It localises to the secreted. It carries out the reaction a ribonucleoside 5'-triphosphate + 2 H2O = a ribonucleoside 5'-phosphate + 2 phosphate + 2 H(+). Facilitates hematophagy by inhibiting ADP-dependent platelet aggregation in the host. Cleaves adenosine triphosphate (ATP) and adenosine diphosphate (ADP) to adenosine monophosphate (AMP) and inorganic phosphate. Shows potential for antithrombotic activity. Can induce basophil activation. May reduce probing time by facilitating the speed of locating blood. The protein is Apyrase of Tabanus yao (Horsefly).